We begin with the raw amino-acid sequence, 229 residues long: B-cell antigen receptor complex-associated protein beta chain (229 aa).

Positions 1–28 are cleaved as a signal peptide; the sequence is MARLALSPVPSHWMVALLLLLSAEPVPA. Residues 29–159 are Extracellular-facing; that stretch reads ARSEDRYRNP…QLKQRNTLKD (131 aa). One can recognise an Ig-like V-type domain in the interval 38 to 138; that stretch reads PKGSACSRIW…TSEVYQGCGT (101 aa). 2 disulfide bridges follow: Cys-43-Cys-126 and Cys-65-Cys-122. N-linked (GlcNAc...) asparagine glycosylation is found at Asn-73, Asn-101, Asn-127, and Asn-128. Residues 160–180 traverse the membrane as a helical segment; that stretch reads GIIMIQTLLIILFIIVPIFLL. Residues 181–229 lie on the Cytoplasmic side of the membrane; the sequence is LDKDDSKAGMEEDHTYEGLDIDQTATYEDIVTLRTGEVKWSVGEHPGQE. The 29-residue stretch at 185 to 213 folds into the ITAM domain; it reads DSKAGMEEDHTYEGLDIDQTATYEDIVTL. Phosphotyrosine; by SRC-type Tyr-kinases is present on residues Tyr-196 and Tyr-207.

In terms of assembly, heterodimer of alpha and beta chains; disulfide-linked. Part of the B-cell antigen receptor complex where the alpha/beta chain heterodimer is non-covalently associated with an antigen-specific membrane-bound surface immunoglobulin of two heavy chains and two light chains. Interacts with LYN. Post-translationally, phosphorylated on tyrosine upon B-cell activation by SRC-type Tyr-kinases such as BLK, LYN and SYK. B-cells.

The protein resides in the cell membrane. In terms of biological role, required in cooperation with CD79A for initiation of the signal transduction cascade activated by the B-cell antigen receptor complex (BCR) which leads to internalization of the complex, trafficking to late endosomes and antigen presentation. Enhances phosphorylation of CD79A, possibly by recruiting kinases which phosphorylate CD79A or by recruiting proteins which bind to CD79A and protect it from dephosphorylation. The polypeptide is B-cell antigen receptor complex-associated protein beta chain (CD79B) (Homo sapiens (Human)).